Reading from the N-terminus, the 221-residue chain is FMN-dependent NADH:quinone oxidoreductase 1 (221 aa).

FMN is bound by residues 17-19 and 148-151; these read SAS and SSGG.

It belongs to the azoreductase type 1 family. As to quaternary structure, homodimer. Requires FMN as cofactor.

It catalyses the reaction 2 a quinone + NADH + H(+) = 2 a 1,4-benzosemiquinone + NAD(+). The catalysed reaction is N,N-dimethyl-1,4-phenylenediamine + anthranilate + 2 NAD(+) = 2-(4-dimethylaminophenyl)diazenylbenzoate + 2 NADH + 2 H(+). Functionally, quinone reductase that provides resistance to thiol-specific stress caused by electrophilic quinones. Its function is as follows. Also exhibits azoreductase activity. Catalyzes the reductive cleavage of the azo bond in aromatic azo compounds to the corresponding amines. This chain is FMN-dependent NADH:quinone oxidoreductase 1, found in Clostridium acetobutylicum (strain ATCC 824 / DSM 792 / JCM 1419 / IAM 19013 / LMG 5710 / NBRC 13948 / NRRL B-527 / VKM B-1787 / 2291 / W).